Here is a 220-residue protein sequence, read N- to C-terminus: Early protein OPG038 (220 aa).

The signal sequence occupies residues Met1 to Ser17. Asn49, Asn79, Asn118, and Asn154 each carry an N-linked (GlcNAc...) asparagine; by host glycan.

It belongs to the orthopoxvirus OPG038 family. As to quaternary structure, homooligomer. Interacts with host CD80 and CD86 when secreted. Post-translationally, glycosylated by host.

Its subcellular location is the host endoplasmic reticulum. It localises to the secreted. Plays a role in immune evasion. When secreted, inhibits T-cell activation by preventing the binding of host CD80 and CD86 to soluble CTLA4 and CD28. In the infected cell, may inhibits host NF kappa B activation. This is Early protein OPG038 (OPG038) from Cynomys gunnisoni (Gunnison's prairie dog).